The chain runs to 207 residues: 3-demethoxyubiquinol 3-hydroxylase (207 aa).

Fe cation contacts are provided by glutamate 56, glutamate 86, histidine 89, glutamate 138, glutamate 170, and histidine 173.

This sequence belongs to the COQ7 family. Fe cation serves as cofactor.

It localises to the cell membrane. The catalysed reaction is a 5-methoxy-2-methyl-3-(all-trans-polyprenyl)benzene-1,4-diol + AH2 + O2 = a 3-demethylubiquinol + A + H2O. Its pathway is cofactor biosynthesis; ubiquinone biosynthesis. Its function is as follows. Catalyzes the hydroxylation of 2-nonaprenyl-3-methyl-6-methoxy-1,4-benzoquinol during ubiquinone biosynthesis. This is 3-demethoxyubiquinol 3-hydroxylase from Dechloromonas aromatica (strain RCB).